A 366-amino-acid polypeptide reads, in one-letter code: Isocitrate dehydrogenase [NAD] subunit alpha, mitochondrial (366 aa).

The transit peptide at M1 to F27 directs the protein to the mitochondrion. K77 carries the N6-succinyllysine modification. T101 is modified (phosphothreonine). Substrate-binding residues include R115, R125, and R146. K223 is modified (N6-acetyllysine). Mg(2+)-binding residues include D233, D257, and D261. K343 bears the N6-acetyllysine; alternate mark. Residue K343 is modified to N6-succinyllysine; alternate. K350 bears the N6-succinyllysine mark.

This sequence belongs to the isocitrate and isopropylmalate dehydrogenases family. Heterooligomer of subunits alpha (IDH3A), beta (IDH3B), and gamma (IDH3G) in the apparent ratio of 2:1:1. The heterodimer containing one IDH3A and one IDH3B subunit and the heterodimer containing one IDH3A and one IDH3G subunit assemble into a heterotetramer (which contains two subunits of IDH3A, one of IDH3B and one of IDH3G) and further into the heterooctamer. Requires Mg(2+) as cofactor. The cofactor is Mn(2+).

It localises to the mitochondrion. It catalyses the reaction D-threo-isocitrate + NAD(+) = 2-oxoglutarate + CO2 + NADH. The heterotetramer and the heterodimer composed of IDH3A and IDH3G subunits can be allosterically activated by citrate (CIT) or/and ADP, and the two activators can act independently or synergistically. The heterodimer composed of IDH3A and IDH3B subunits cannot be allosterically regulated and the allosteric regulation of the heterotetramer is through the IDH3G subunit and not the IDH3B subunit. The IDH3G subunit contains the allosteric site which consists of a CIT-binding site and an ADP-binding site, and the binding of CIT and ADP causes conformational changes at the allosteric site which are transmitted to the active site in the catalytic subunit (IDH3A) through a cascade of conformational changes at the heterodimer interface, leading to stabilization of the isocitrate-binding at the active site and thus activation of the enzyme. ATP can activate the heterotetramer and the heterodimer composed of IDH3A and IDH3G subunits at low concentrations but inhibits their activities at high concentrations, whereas ATP exhibits only inhibitory effect on the heterodimer composed of IDH3A and IDH3B subunits. Functionally, catalytic subunit of the enzyme which catalyzes the decarboxylation of isocitrate (ICT) into alpha-ketoglutarate. The heterodimer composed of the alpha (IDH3A) and beta (IDH3B) subunits and the heterodimer composed of the alpha (IDH3A) and gamma (IDH3G) subunits, have considerable basal activity but the full activity of the heterotetramer (containing two subunits of IDH3A, one of IDH3B and one of IDH3G) requires the assembly and cooperative function of both heterodimers. This Homo sapiens (Human) protein is Isocitrate dehydrogenase [NAD] subunit alpha, mitochondrial.